A 488-amino-acid polypeptide reads, in one-letter code: DNA polymerase II small subunit (488 aa).

The protein belongs to the DNA polymerase delta/II small subunit family. Heterodimer of a large subunit and a small subunit.

It carries out the reaction DNA(n) + a 2'-deoxyribonucleoside 5'-triphosphate = DNA(n+1) + diphosphate. The enzyme catalyses Exonucleolytic cleavage in the 3'- to 5'-direction to yield nucleoside 5'-phosphates.. Its function is as follows. Possesses two activities: a DNA synthesis (polymerase) and an exonucleolytic activity that degrades single-stranded DNA in the 3' to 5' direction. Has a template-primer preference which is characteristic of a replicative DNA polymerase. The protein is DNA polymerase II small subunit (polB) of Archaeoglobus fulgidus (strain ATCC 49558 / DSM 4304 / JCM 9628 / NBRC 100126 / VC-16).